Reading from the N-terminus, the 285-residue chain is MAQSRLFFSADKAEAERTYNILEQAFEDDGFPIAITEIDEDRQIFEVSVYVEDDAEEVAARVDALVGPGLFDTEELPDIDWVTHSLEGLKPVRAGHFFVHGSHDRDKIEPGDIAIEIDAGLAFGTGHHGTTAGCLELIEETVQTEHPTNALDLGTGSAVLAIAIARLAPIPILATDIDPIAVTVAAENAAKNGVAEHIVTATAEGFGHPIFRSYSPFDLIVANILANPLIELAPSIKEHLAPGGSIILSGILDSQHDAVLAAYQTQGLTHQKTLHREGWVAIHLK.

S-adenosyl-L-methionine is bound by residues threonine 131, glycine 154, aspartate 176, and asparagine 223.

The protein belongs to the methyltransferase superfamily. PrmA family.

The protein resides in the cytoplasm. It carries out the reaction L-lysyl-[protein] + 3 S-adenosyl-L-methionine = N(6),N(6),N(6)-trimethyl-L-lysyl-[protein] + 3 S-adenosyl-L-homocysteine + 3 H(+). Its function is as follows. Methylates ribosomal protein L11. In Brucella suis (strain ATCC 23445 / NCTC 10510), this protein is Ribosomal protein L11 methyltransferase.